Here is a 685-residue protein sequence, read N- to C-terminus: Glycine--tRNA ligase beta subunit (685 aa).

The protein belongs to the class-II aminoacyl-tRNA synthetase family. In terms of assembly, tetramer of two alpha and two beta subunits.

The protein localises to the cytoplasm. The enzyme catalyses tRNA(Gly) + glycine + ATP = glycyl-tRNA(Gly) + AMP + diphosphate. In Azotobacter vinelandii (strain DJ / ATCC BAA-1303), this protein is Glycine--tRNA ligase beta subunit.